The sequence spans 471 residues: Adenosylhomocysteinase (471 aa).

Substrate-binding residues include threonine 60, aspartate 135, and glutamate 196. 197–199 is a binding site for NAD(+); it reads TTT. Substrate-binding residues include lysine 226 and aspartate 230. Residues asparagine 231, 260-265, glutamate 283, asparagine 318, 339-341, and asparagine 387 contribute to the NAD(+) site; these read GYGDVG and IGH.

Belongs to the adenosylhomocysteinase family. The cofactor is NAD(+).

It is found in the cytoplasm. The catalysed reaction is S-adenosyl-L-homocysteine + H2O = L-homocysteine + adenosine. The protein operates within amino-acid biosynthesis; L-homocysteine biosynthesis; L-homocysteine from S-adenosyl-L-homocysteine: step 1/1. In terms of biological role, may play a key role in the regulation of the intracellular concentration of adenosylhomocysteine. This chain is Adenosylhomocysteinase, found in Chlorobaculum tepidum (strain ATCC 49652 / DSM 12025 / NBRC 103806 / TLS) (Chlorobium tepidum).